We begin with the raw amino-acid sequence, 95 residues long: Aspartyl/glutamyl-tRNA(Asn/Gln) amidotransferase subunit C (95 aa).

This sequence belongs to the GatC family. In terms of assembly, heterotrimer of A, B and C subunits.

It carries out the reaction L-glutamyl-tRNA(Gln) + L-glutamine + ATP + H2O = L-glutaminyl-tRNA(Gln) + L-glutamate + ADP + phosphate + H(+). The catalysed reaction is L-aspartyl-tRNA(Asn) + L-glutamine + ATP + H2O = L-asparaginyl-tRNA(Asn) + L-glutamate + ADP + phosphate + 2 H(+). In terms of biological role, allows the formation of correctly charged Asn-tRNA(Asn) or Gln-tRNA(Gln) through the transamidation of misacylated Asp-tRNA(Asn) or Glu-tRNA(Gln) in organisms which lack either or both of asparaginyl-tRNA or glutaminyl-tRNA synthetases. The reaction takes place in the presence of glutamine and ATP through an activated phospho-Asp-tRNA(Asn) or phospho-Glu-tRNA(Gln). The chain is Aspartyl/glutamyl-tRNA(Asn/Gln) amidotransferase subunit C from Rhizobium leguminosarum bv. trifolii (strain WSM2304).